The primary structure comprises 374 residues: Aminodeoxychorismate lyase (374 aa).

The protein belongs to the class-IV pyridoxal-phosphate-dependent aminotransferase family. Homodimer. Pyridoxal 5'-phosphate is required as a cofactor.

Its subcellular location is the cytoplasm. The enzyme catalyses 4-amino-4-deoxychorismate = 4-aminobenzoate + pyruvate + H(+). It participates in cofactor biosynthesis; tetrahydrofolate biosynthesis; 4-aminobenzoate from chorismate: step 2/2. In terms of biological role, converts 4-amino-4-deoxychorismate into 4-aminobenzoate (PABA) and pyruvate. This chain is Aminodeoxychorismate lyase (ABZ2), found in Saccharomyces cerevisiae (strain ATCC 204508 / S288c) (Baker's yeast).